A 169-amino-acid polypeptide reads, in one-letter code: Small ribosomal subunit protein uS9 (169 aa).

Disordered stretches follow at residues 1–29 and 128–169; these read MVEPTGIEDVQEYDENSEEYPAEYTTETP and MDPE…YSKR. Residues 9–21 are compositionally biased toward acidic residues; that stretch reads DVQEYDENSEEYP. Residues 150–169 are compositionally biased toward basic residues; the sequence is VERKKAGLKKARKAPQYSKR.

It belongs to the universal ribosomal protein uS9 family.

This is Small ribosomal subunit protein uS9 from Thermobifida fusca (strain YX).